Consider the following 309-residue polypeptide: MEKRIQQASKFGKVAVLMGGSAAEREISLKSGKAVLEALRSGGIDAEGIDVGRDLIAPLLERRFDRVFNVIHGRGGEDGVLQGALACLRVPCTGSGVLASALSMDKLRTKLCWTGAGLPTPPWLRLDSPDDLERCRQALGFPVIVKPAEEGSSIGMSRAATAEELAQAWERASGYGCAVFAERWIDGVEYTGGMLKGVPLPLIRLETPHAFYDFDAKYRADTTRYHCPCGLDTGREAELQALVLRACQIVGVSGWGRVDLLVDRSGQPWLIEVNTVPGMTDHSLVPMAAKAAGIDFQELVWHILETSFA.

In terms of domain architecture, ATP-grasp spans K110–E305. R136–T191 lines the ATP pocket. 3 residues coordinate Mg(2+): D259, E272, and N274.

Belongs to the D-alanine--D-alanine ligase family. The cofactor is Mg(2+). Mn(2+) serves as cofactor.

It is found in the cytoplasm. It carries out the reaction 2 D-alanine + ATP = D-alanyl-D-alanine + ADP + phosphate + H(+). It participates in cell wall biogenesis; peptidoglycan biosynthesis. In terms of biological role, cell wall formation. In Methylococcus capsulatus (strain ATCC 33009 / NCIMB 11132 / Bath), this protein is D-alanine--D-alanine ligase.